The following is a 168-amino-acid chain: Bifunctional protein PyrR (168 aa).

Substrate-binding positions include 36-37 (TG), Arg-77, 94-102 (DDVLMSGRT), and Val-151. A PRPP-binding motif is present at residues 90–102 (LVLIDDVLMSGRT).

Belongs to the purine/pyrimidine phosphoribosyltransferase family. PyrR subfamily.

The enzyme catalyses UMP + diphosphate = 5-phospho-alpha-D-ribose 1-diphosphate + uracil. Functionally, regulates the transcription of the pyrimidine nucleotide (pyr) operon in response to exogenous pyrimidines. Its function is as follows. Also displays a weak uracil phosphoribosyltransferase activity which is not physiologically significant. The sequence is that of Bifunctional protein PyrR from Pseudomonas fluorescens.